We begin with the raw amino-acid sequence, 549 residues long: Protein wntless homolog (549 aa).

The N-terminal stretch at 1–34 is a signal peptide; sequence MAGGAVIENLSNRKLFVIFAGLLVIQIMFFLIGA. Residues 36-236 are Lumenal-facing; sequence YAPSPSSYME…RLIEIHQNGG (201 aa). Residues 237–257 form a helical membrane-spanning segment; it reads FTLVWLWTKTFMTPVVAICLW. At 258–275 the chain is on the cytoplasmic side; the sequence is WYYNRINQLARNPLLLER. Residues 276–296 form a helical membrane-spanning segment; the sequence is AILLLGLSLVILDFPIEWISL. The Lumenal portion of the chain corresponds to 297–310; the sequence is TYRIPFLLLISDLR. The chain crosses the membrane as a helical span at residues 311-331; that stretch reads QGLFYTVLFSFWLIFAGEHLI. Residues 332-345 lie on the Cytoplasmic side of the membrane; that stretch reads DDNTRNNLKSYRFN. The chain crosses the membrane as a helical span at residues 346 to 366; that stretch reads LSFIITASLGLLIYDLIERGI. The Lumenal segment spans residues 367–383; that stretch reads QLYDPFYSVWSSPTGSQ. The chain crosses the membrane as a helical span at residues 384–404; that stretch reads IAYFAIFISAISTVAYFIFLF. At 405-439 the chain is on the cytoplasmic side; the sequence is FKIARVWSTIKSKRSAQIYQTSENRRLKVEGVIYR. The helical transmembrane segment at 440 to 460 threads the bilayer; the sequence is FKFLMLFTLLCSAFTIAAYFM. Residues 461–483 are Lumenal-facing; it reads KQYGEAQLHGDEARDGFLTGSTS. The chain crosses the membrane as a helical span at residues 484–504; the sequence is AFFTGAFGMCNIYVLLLLAMY. The Cytoplasmic portion of the chain corresponds to 505–549; the sequence is APSHKHYRGASQLIDENDDDEIMEDPSNQHTESNAMTTFLKPSTD. Positions 524–549 are disordered; it reads DEIMEDPSNQHTESNAMTTFLKPSTD. The span at 530–549 shows a compositional bias: polar residues; it reads PSNQHTESNAMTTFLKPSTD.

It belongs to the wntless family. In terms of tissue distribution, expressed in the tail hypodermis, stomatointestinal muscle, the mesoblast cell M and its descendants, CAN neurons, the developing vulva, the pharynx and the pharyngeal intestinal valve.

The protein localises to the cell membrane. Its subcellular location is the early endosome membrane. It localises to the golgi apparatus membrane. It is found in the basal cell membrane. The protein resides in the late endosome membrane. Functionally, probable sorting receptor which regulates endocytosis and secretion of the wnt ligand egl-20. Recycling of mig-14 from the plasma membrane to the Golgi apparatus by the retromer complex is essential for its function. Its endosomal trafficking is regulated by its association with sorting nexin snx-3 on early endosomes and the mtm-6/mtm-9 myotubularin complex. Required in embryonic development for endoderm specification and the correct positioning and orientation of the mitotic spindles and division planes in blastomere cells. Functions during vulval development, playing a role in vulval precursor cell fate specification. During development, specifically regulates the migration of HSN neurons, the left Q neuroblast (QL) and its descendants and the distal tip cells of the gonads. Positioning of Q neuroblasts may be both dependent and independent of hox gene mab-5. Involved in establishing ALM and PLM neuronal cell polarity. The protein is Protein wntless homolog of Caenorhabditis elegans.